The chain runs to 132 residues: Small ribosomal subunit protein uS8 (132 aa).

It belongs to the universal ribosomal protein uS8 family. In terms of assembly, part of the 30S ribosomal subunit. Contacts proteins S5 and S12.

Functionally, one of the primary rRNA binding proteins, it binds directly to 16S rRNA central domain where it helps coordinate assembly of the platform of the 30S subunit. In Coprothermobacter proteolyticus (strain ATCC 35245 / DSM 5265 / OCM 4 / BT), this protein is Small ribosomal subunit protein uS8.